The sequence spans 347 residues: Isopentenyl-diphosphate delta-isomerase (347 aa).

9–10 (RK) provides a ligand contact to substrate. Residues 65 to 67 (AMT), Ser95, and Asn124 contribute to the FMN site. Position 95-97 (95-97 (STH)) interacts with substrate. Position 154 (Gln154) interacts with substrate. Residue Glu155 coordinates Mg(2+). FMN contacts are provided by residues Lys186, Ser211, Thr216, 262–264 (GVR), and 283–284 (SR).

It belongs to the IPP isomerase type 2 family. Homooctamer. Dimer of tetramers. FMN serves as cofactor. NADPH is required as a cofactor. It depends on Mg(2+) as a cofactor.

It is found in the cytoplasm. It catalyses the reaction isopentenyl diphosphate = dimethylallyl diphosphate. Functionally, involved in the biosynthesis of isoprenoids. Catalyzes the 1,3-allylic rearrangement of the homoallylic substrate isopentenyl (IPP) to its allylic isomer, dimethylallyl diphosphate (DMAPP). The sequence is that of Isopentenyl-diphosphate delta-isomerase from Staphylococcus saprophyticus subsp. saprophyticus (strain ATCC 15305 / DSM 20229 / NCIMB 8711 / NCTC 7292 / S-41).